The sequence spans 207 residues: Protein DMP1 (207 aa).

The disordered stretch occupies residues 1–20 (MSETSLLIPKTNSPASSENM). Helical transmembrane passes span 33–53 (LIKL…PVLT), 64–84 (VMSS…CFTD), 121–141 (IADF…VLLD), and 159–179 (LVMA…ALFP).

The protein belongs to the plant DMP1 protein family. As to expression, expressed in leaves, siliques and roots.

Its subcellular location is the endoplasmic reticulum membrane. It is found in the vacuole membrane. Involved in membrane remodeling including fission during breakdown of the endoplasmic reticulum (ER) and the tonoplast during leaf senescence and in membrane fusion during vacuole biogenesis in roots. The polypeptide is Protein DMP1 (Arabidopsis thaliana (Mouse-ear cress)).